The chain runs to 347 residues: NADH-ubiquinone oxidoreductase chain 2 (347 aa).

A run of 10 helical transmembrane segments spans residues 13 to 33 (IILGTSIVITSSHWLTVWIGF), 59 to 79 (YFLIQATASMLLMLAVTINLL), 84 to 104 (WAVSNMIDPLALTIMTLALAM), 111 to 131 (FHFWVPEVTQGVPLLSGLILL), 149 to 169 (IDPTLILTMSILSVLVGGWGG), 178 to 198 (IMAYSSISHMGWMTAILIYNP), 201 to 221 (TILNLLLYIMMTSTTFILLII), 240 to 260 (IAIIILTTMLSLGGLPPLTGF), 276 to 296 (IALSLFMAMAALLNLYFYTRL), and 326 to 346 (LSPLIIISTMILPLTPTMSAL).

This sequence belongs to the complex I subunit 2 family. In terms of assembly, core subunit of respiratory chain NADH dehydrogenase (Complex I) which is composed of 45 different subunits. Interacts with TMEM242.

The protein resides in the mitochondrion inner membrane. It carries out the reaction a ubiquinone + NADH + 5 H(+)(in) = a ubiquinol + NAD(+) + 4 H(+)(out). In terms of biological role, core subunit of the mitochondrial membrane respiratory chain NADH dehydrogenase (Complex I) that is believed to belong to the minimal assembly required for catalysis. Complex I functions in the transfer of electrons from NADH to the respiratory chain. The immediate electron acceptor for the enzyme is believed to be ubiquinone. The sequence is that of NADH-ubiquinone oxidoreductase chain 2 from Chrotopterus auritus (Peters's woolly false vampire bat).